We begin with the raw amino-acid sequence, 560 residues long: Proteasome-associated ATPase (560 aa).

Residues 1–19 (MSQQHDDRRPPDTADRDLA) are compositionally biased toward basic and acidic residues. The interval 1 to 21 (MSQQHDDRRPPDTADRDLARQ) is disordered. A coiled-coil region spans residues 16-55 (RDLARQATSLAEKNERLTAALTAARAQLVEMKAQLEEVSK). 237 to 242 (GCGKTL) lines the ATP pocket. The interval 559–560 (YL) is docks into pockets in the proteasome alpha-ring.

It belongs to the AAA ATPase family. Homohexamer. Assembles into a hexameric ring structure that caps the 20S proteasome core. Strongly interacts with the prokaryotic ubiquitin-like protein Pup through a hydrophobic interface; the interacting region of ARC lies in its N-terminal coiled-coil domain. There is one Pup binding site per ARC hexamer ring. Upon ATP-binding, the C-terminus of ARC interacts with the alpha-rings of the proteasome core, possibly by binding to the intersubunit pockets.

It functions in the pathway protein degradation; proteasomal Pup-dependent pathway. Its function is as follows. ATPase which is responsible for recognizing, binding, unfolding and translocation of pupylated proteins into the bacterial 20S proteasome core particle. May be essential for opening the gate of the 20S proteasome via an interaction with its C-terminus, thereby allowing substrate entry and access to the site of proteolysis. Thus, the C-termini of the proteasomal ATPase may function like a 'key in a lock' to induce gate opening and therefore regulate proteolysis. The protein is Proteasome-associated ATPase of Beutenbergia cavernae (strain ATCC BAA-8 / DSM 12333 / CCUG 43141 / JCM 11478 / NBRC 16432 / NCIMB 13614 / HKI 0122).